Reading from the N-terminus, the 266-residue chain is Putative carbamate hydrolase RutD (266 aa).

In terms of domain architecture, AB hydrolase-1 spans 14–238; it reads PVVVLSAGLG…RVEMPWGGHA (225 aa).

The protein belongs to the AB hydrolase superfamily. Hydrolase RutD family.

It carries out the reaction carbamate + 2 H(+) = NH4(+) + CO2. Functionally, involved in pyrimidine catabolism. May facilitate the hydrolysis of carbamate, a reaction that can also occur spontaneously. The protein is Putative carbamate hydrolase RutD of Klebsiella pneumoniae (strain 342).